A 294-amino-acid polypeptide reads, in one-letter code: Homoserine kinase (294 aa).

83-93 (PLARGLGSSAS) is an ATP binding site.

This sequence belongs to the GHMP kinase family. Homoserine kinase subfamily.

The protein localises to the cytoplasm. The catalysed reaction is L-homoserine + ATP = O-phospho-L-homoserine + ADP + H(+). It participates in amino-acid biosynthesis; L-threonine biosynthesis; L-threonine from L-aspartate: step 4/5. In terms of biological role, catalyzes the ATP-dependent phosphorylation of L-homoserine to L-homoserine phosphate. In Oceanobacillus iheyensis (strain DSM 14371 / CIP 107618 / JCM 11309 / KCTC 3954 / HTE831), this protein is Homoserine kinase.